We begin with the raw amino-acid sequence, 340 residues long: MPGNTKKSADSGLTAKDYYFDSYSHWGIHEEMLKDDVRTLSYRDAIMQNPHLFRDKIVLDVGCGTGILSMFCARAGAKHVYGVDMSEIIHKAVQIVEVNKLSDRITLIQGKMEEIQLPVEKVDIIVSEWMGYFLLYESMLDTVLVARDRYLAPDGLLFPDRAQIQLAAIEDADYKSEKIGFWDDVYGFDFSPIKKDVWKEPLVDTVDRIAVNTNSCVILDLDLKTVKKEDLAFSSPFEITATRNDFVHAFLAWFDIEFSACHKPIKFSTGPFSRYTHWKQTVFYTHKDLTVKAGEYIRGTITCKPAEGNHRELDIDISYTFNPREPNREPVSEDLSYRMC.

In terms of domain architecture, SAM-dependent MTase PRMT-type spans 16–311; it reads KDYYFDSYSH…TCKPAEGNHR (296 aa). Tyr19 bears the Phosphotyrosine mark. The S-adenosyl-L-methionine site is built by His29, Arg38, Gly62, Asp84, and Glu113. Catalysis depends on residues Glu128 and Glu137. At Ser176 the chain carries Phosphoserine.

It belongs to the class I-like SAM-binding methyltransferase superfamily. Protein arginine N-methyltransferase family. Interacts with pab2.

It localises to the nucleus. It catalyses the reaction L-arginyl-[protein] + S-adenosyl-L-methionine = N(omega)-methyl-L-arginyl-[protein] + S-adenosyl-L-homocysteine + H(+). It carries out the reaction L-arginyl-[protein] + 2 S-adenosyl-L-methionine = N(omega),N(omega)-dimethyl-L-arginyl-[protein] + 2 S-adenosyl-L-homocysteine + 2 H(+). S-adenosyl-L-methionine-dependent protein-arginine N-methyltransferase that catalyzes both the mono- and asymmetric (type I) dimethylation of the guanidino nitrogens of arginine residues in target proteins. Asymmetrically dimethylates the polyadenylate-binding protein pab2, modulating pab2 oligomerization. In Schizosaccharomyces pombe (strain 972 / ATCC 24843) (Fission yeast), this protein is Protein arginine N-methyltransferase 1.